Reading from the N-terminus, the 356-residue chain is Guanine nucleotide-binding protein alpha-2 subunit (356 aa).

Glycine 2 is lipidated: N-myristoyl glycine. The S-palmitoyl cysteine moiety is linked to residue cysteine 4. One can recognise a G-alpha domain in the interval 35-356 (REVKLLLLGA…LTNNLRDIVL (322 aa)). Residues 38-51 (KLLLLGAGESGKST) are G1 motif. Glutamate 46, serine 47, glycine 48, lysine 49, serine 50, threonine 51, aspartate 153, leucine 178, threonine 184, glycine 206, asparagine 272, lysine 273, aspartate 275, and alanine 329 together coordinate GTP. Serine 50 contributes to the Mg(2+) binding site. The interval 176-184 (DILRCRNKT) is G2 motif. Mg(2+) is bound at residue threonine 184. A G3 motif region spans residues 199 to 208 (YRIFDVGGQR). The interval 268–275 (ILFLNKVD) is G4 motif. The interval 327–332 (TNATDV) is G5 motif.

This sequence belongs to the G-alpha family. In terms of assembly, g proteins are composed of 3 units; alpha, beta and gamma. The alpha chain contains the guanine nucleotide binding site. It depends on Mg(2+) as a cofactor.

Its function is as follows. Guanine nucleotide-binding proteins (G proteins) are involved as modulators or transducers in various transmembrane signaling systems. The sequence is that of Guanine nucleotide-binding protein alpha-2 subunit (GPA2) from Mycosarcoma maydis (Corn smut fungus).